Consider the following 271-residue polypeptide: Acetyl-coenzyme A carboxylase carboxyl transferase subunit alpha (271 aa).

Positions 1-247 (MSRELIRTVD…KKTILEALGE (247 aa)) constitute a CoA carboxyltransferase C-terminal domain.

This sequence belongs to the AccA family. Acetyl-CoA carboxylase is a heterohexamer composed of biotin carboxyl carrier protein (AccB), biotin carboxylase (AccC) and two subunits each of ACCase subunit alpha (AccA) and ACCase subunit beta (AccD).

The protein resides in the cytoplasm. It catalyses the reaction N(6)-carboxybiotinyl-L-lysyl-[protein] + acetyl-CoA = N(6)-biotinyl-L-lysyl-[protein] + malonyl-CoA. It functions in the pathway lipid metabolism; malonyl-CoA biosynthesis; malonyl-CoA from acetyl-CoA: step 1/1. Functionally, component of the acetyl coenzyme A carboxylase (ACC) complex. First, biotin carboxylase catalyzes the carboxylation of biotin on its carrier protein (BCCP) and then the CO(2) group is transferred by the carboxyltransferase to acetyl-CoA to form malonyl-CoA. In Clostridium perfringens (strain SM101 / Type A), this protein is Acetyl-coenzyme A carboxylase carboxyl transferase subunit alpha.